Consider the following 78-residue polypeptide: MCDDSYDAVEEYYFNKSVAGISGQENWNKQLATQVYSRSLQPEILPTLKPLSCNKERANAGKRVSEEEQINGKRKRKD.

Over residues 56–66 (ERANAGKRVSE) the composition is skewed to basic and acidic residues. A disordered region spans residues 56 to 78 (ERANAGKRVSEEEQINGKRKRKD).

This is an uncharacterized protein from Saccharomyces cerevisiae (strain ATCC 204508 / S288c) (Baker's yeast).